A 346-amino-acid polypeptide reads, in one-letter code: Short-wave-sensitive opsin 1 (346 aa).

Topologically, residues 1 to 31 (MSGEDDFYLFQNISSVGPWDGPQYHLAPVWA) are extracellular. An N-linked (GlcNAc...) asparagine glycan is attached at Asn-12. Residues 32 to 56 (FRLQAAFMGFVFFVGTPLNAIVLVA) traverse the membrane as a helical segment. Topologically, residues 57–68 (TLHYKKLRQPLN) are cytoplasmic. A helical membrane pass occupies residues 69-94 (YILVNVSLGGFLFCIFSVFTVFIASC). The Extracellular portion of the chain corresponds to 95-108 (HGYFLFGRHVCALE). A disulfide bond links Cys-105 and Cys-182. Residues 109–128 (AFLGSVAGLVTGWSLAFLAF) traverse the membrane as a helical segment. The Cytoplasmic segment spans residues 129–147 (ERYVVICKPFGSIRFNSKH). A helical membrane pass occupies residues 148–171 (ALMVVLATWIIGIGVSIPPFFGWS). Residues 172 to 197 (RFIPEGLQCSCGPDWYTVGTKYRSEY) lie on the Extracellular side of the membrane. The helical transmembrane segment at 198–225 (YTWFLFIFCFIIPLSLICFSYSQLLRTL) threads the bilayer. At 226 to 247 (RAVAAQQQESATTQKAEREVSH) the chain is on the cytoplasmic side. The chain crosses the membrane as a helical span at residues 248 to 271 (MVVVMVGSFCLCYVPYAALAMYMV). The Extracellular segment spans residues 272–279 (NNRNHGLD). A helical membrane pass occupies residues 280–304 (LRLVTIPAFFSKSSCVYNPIIYCFM). Position 291 is an N6-(retinylidene)lysine (Lys-291). The Cytoplasmic portion of the chain corresponds to 305-346 (NKQFRACILEMVCRKPMADESDVSGSQKTEVSTVSSSKVGPH). The segment at 324-346 (ESDVSGSQKTEVSTVSSSKVGPH) is disordered. The segment covering 330 to 346 (SQKTEVSTVSSSKVGPH) has biased composition (low complexity).

It belongs to the G-protein coupled receptor 1 family. Opsin subfamily. Phosphorylated on some or all of the serine and threonine residues present in the C-terminal region. As to expression, expressed in the inner and outer segments of cone photoreceptor cells in the retina (at protein level).

It is found in the cell membrane. It localises to the photoreceptor inner segment. Its subcellular location is the cell projection. The protein localises to the cilium. The protein resides in the photoreceptor outer segment. It is found in the cytoplasm. It localises to the perinuclear region. Visual pigments are the light-absorbing molecules that mediate vision. They consist of an apoprotein, opsin, covalently linked to cis-retinal. Required for the maintenance of cone outer segment organization in the ventral retina, but not essential for the maintenance of functioning cone photoreceptors. Involved in ensuring correct abundance and localization of retinal membrane proteins. May increase spectral sensitivity in dim light. The polypeptide is Short-wave-sensitive opsin 1 (Opn1sw) (Mus musculus (Mouse)).